A 210-amino-acid polypeptide reads, in one-letter code: Uracil phosphoribosyltransferase (210 aa).

5-phospho-alpha-D-ribose 1-diphosphate-binding positions include R78, R103, and 130-138; that span reads DPMLATGGT. Uracil is bound by residues I193 and 198 to 200; that span reads GDA. D199 provides a ligand contact to 5-phospho-alpha-D-ribose 1-diphosphate.

The protein belongs to the UPRTase family. The cofactor is Mg(2+).

It carries out the reaction UMP + diphosphate = 5-phospho-alpha-D-ribose 1-diphosphate + uracil. The protein operates within pyrimidine metabolism; UMP biosynthesis via salvage pathway; UMP from uracil: step 1/1. Allosterically activated by GTP. Its function is as follows. Catalyzes the conversion of uracil and 5-phospho-alpha-D-ribose 1-diphosphate (PRPP) to UMP and diphosphate. In Stenotrophomonas maltophilia (strain K279a), this protein is Uracil phosphoribosyltransferase.